A 228-amino-acid chain; its full sequence is Cytochrome c oxidase subunit 2 (228 aa).

Topologically, residues 1-14 (MPHASQLSLQEAMG) are mitochondrial intermembrane. Residues 15 to 45 (PTMEEVIFLHDHVLLLTCLMTMVITMFTLTA) form a helical membrane-spanning segment. Residues 46-59 (TTTALTHNDPTEEV) lie on the Mitochondrial matrix side of the membrane. The helical transmembrane segment at 60-87 (EQLEAAWTVAPIMILILTALPSVRSLYL) threads the bilayer. At 88-228 (MEEVFNPYLT…HFEQWLISEQ (141 aa)) the chain is on the mitochondrial intermembrane side. 6 residues coordinate Cu cation: histidine 162, cysteine 197, glutamate 199, cysteine 201, histidine 205, and methionine 208. Position 199 (glutamate 199) interacts with Mg(2+).

It belongs to the cytochrome c oxidase subunit 2 family. In terms of assembly, component of the cytochrome c oxidase (complex IV, CIV), a multisubunit enzyme composed of 14 subunits. The complex is composed of a catalytic core of 3 subunits MT-CO1, MT-CO2 and MT-CO3, encoded in the mitochondrial DNA, and 11 supernumerary subunits COX4I, COX5A, COX5B, COX6A, COX6B, COX6C, COX7A, COX7B, COX7C, COX8 and NDUFA4, which are encoded in the nuclear genome. The complex exists as a monomer or a dimer and forms supercomplexes (SCs) in the inner mitochondrial membrane with NADH-ubiquinone oxidoreductase (complex I, CI) and ubiquinol-cytochrome c oxidoreductase (cytochrome b-c1 complex, complex III, CIII), resulting in different assemblies (supercomplex SCI(1)III(2)IV(1) and megacomplex MCI(2)III(2)IV(2)). Found in a complex with TMEM177, COA6, COX18, COX20, SCO1 and SCO2. Interacts with TMEM177 in a COX20-dependent manner. Interacts with COX20. Interacts with COX16. Requires Cu cation as cofactor.

The protein resides in the mitochondrion inner membrane. It catalyses the reaction 4 Fe(II)-[cytochrome c] + O2 + 8 H(+)(in) = 4 Fe(III)-[cytochrome c] + 2 H2O + 4 H(+)(out). Component of the cytochrome c oxidase, the last enzyme in the mitochondrial electron transport chain which drives oxidative phosphorylation. The respiratory chain contains 3 multisubunit complexes succinate dehydrogenase (complex II, CII), ubiquinol-cytochrome c oxidoreductase (cytochrome b-c1 complex, complex III, CIII) and cytochrome c oxidase (complex IV, CIV), that cooperate to transfer electrons derived from NADH and succinate to molecular oxygen, creating an electrochemical gradient over the inner membrane that drives transmembrane transport and the ATP synthase. Cytochrome c oxidase is the component of the respiratory chain that catalyzes the reduction of oxygen to water. Electrons originating from reduced cytochrome c in the intermembrane space (IMS) are transferred via the dinuclear copper A center (CU(A)) of subunit 2 and heme A of subunit 1 to the active site in subunit 1, a binuclear center (BNC) formed by heme A3 and copper B (CU(B)). The BNC reduces molecular oxygen to 2 water molecules using 4 electrons from cytochrome c in the IMS and 4 protons from the mitochondrial matrix. In Lycodon semicarinatus (Ryukyu odd-tooth snake), this protein is Cytochrome c oxidase subunit 2 (MT-CO2).